We begin with the raw amino-acid sequence, 103 residues long: Cyclotide vitri-A (103 aa).

The N-terminal stretch at 1-9 is a signal peptide; it reads AAFALPAFA. The propeptide occupies 10-69; sequence SFEKDVITPAALEAVLNRKAPLSNIMMENDAIVNVIANVKTVISNPVLEEALLKTNHGVN. Positions 70–99 form a cross-link, cyclopeptide (Gly-Asn); sequence GIPCGESCVWIPCITSAIGCSCKSKVCYRN. 3 disulfides stabilise this stretch: cysteine 73–cysteine 89, cysteine 77–cysteine 91, and cysteine 82–cysteine 96. Positions 100–103 are excised as a propeptide; that stretch reads SLDN.

Post-translationally, this is a cyclic peptide.

Its function is as follows. Probably participates in a plant defense mechanism. The sequence is that of Cyclotide vitri-A from Viola biflora (Yellow wood violet).